Reading from the N-terminus, the 133-residue chain is Large ribosomal subunit protein bL20 (133 aa).

Belongs to the bacterial ribosomal protein bL20 family.

Functionally, binds directly to 23S ribosomal RNA and is necessary for the in vitro assembly process of the 50S ribosomal subunit. It is not involved in the protein synthesizing functions of that subunit. This is Large ribosomal subunit protein bL20 from Bartonella bacilliformis (strain ATCC 35685 / KC583 / Herrer 020/F12,63).